Here is a 635-residue protein sequence, read N- to C-terminus: MHGLLLAAGLLSLPLHVLAHPQPSTSTSLAGRAGAVDLNEFRIAHRSSYTSHDEMKKLPSIASFRQGTYLEVATELVKQTIPNMEFRLVDDHYVGDSGIGHVRFRQTMHGIDIDNSDFNVNVGKDGKVLSHGNSFYTGPAPSSNPMVKRDFIDPMQALHGVRKALNLPIKADGAHVEDMSEHKVMFKGTSGALSDPTAKLCYMAKEDGSLALTWRVETDIGDNWLLSYMDAKESSKVHNVVDYVAHATFQVYKWGLADPTEGKREILTNPWNLKTSPLTWLSDGQNNFTATRGNNAIAQYNPDGGNDYENNYRPSPKNLKFEYPYSPDMNPPKTYIDASVTELFYTSNVCHDLYYMLGFNEKAGNFQVNNRGQGGKGNDFVILNAQDGSGTNNANFATPPDGQPGRMRAYIWTRANPPRDASFEAGTIIHEYTHGLSNRLCGGPANSRCLNAIESGGMGEGWGDFYATAVRLKPNDTRKTNYVKGGWVNNSPKGVRMYPYSTDMNVNPLVYTSNNKLNEVHAIGTVWCTMLYEVLWNLIDKHGKNDGPVPIFENGVPNDGKYLAMKIVMDGMAIQPCNPNFVQARDAILDADMNLTKGANKCEIWKGFAKRGLGVGAKFDPKNRTGSTQVPNECK.

The N-terminal stretch at 1-19 (MHGLLLAAGLLSLPLHVLA) is a signal peptide. A propeptide spanning residues 20 to 246 (HPQPSTSTSL…VHNVVDYVAH (227 aa)) is cleaved from the precursor. N-linked (GlcNAc...) asparagine glycosylation occurs at N287. Residue H430 coordinates Zn(2+). E431 is an active-site residue. Zn(2+) is bound at residue H434. 3 N-linked (GlcNAc...) asparagine glycosylation sites follow: N475, N594, and N623.

Belongs to the peptidase M36 family. Zn(2+) serves as cofactor.

The protein localises to the secreted. Functionally, secreted metalloproteinase probably acting as a virulence factor. This chain is Probable extracellular metalloproteinase 1 (MEP1), found in Trichophyton verrucosum (strain HKI 0517).